The following is a 2157-amino-acid chain: DExH-box ATP-dependent RNA helicase DExH14 (2157 aa).

Residues 374 to 394 are disordered; the sequence is KAASNTQSRMPTYGTQVTVQT. Residues 375 to 394 are compositionally biased toward polar residues; that stretch reads AASNTQSRMPTYGTQVTVQT. Residues 517–699 enclose the Helicase ATP-binding 1 domain; the sequence is QTVYHTNENI…FLRVNTDTGL (183 aa). 530–537 is a binding site for ATP; it reads APTGAGKT. The short motif at 641–644 is the DEVH box element; sequence DEVH. Residues 734-932 enclose the Helicase C-terminal 1 domain; that stretch reads CYKKVVDSIK…SLKDNLNAEV (199 aa). The region spanning 1008–1315 is the SEC63 1 domain; that stretch reads CTELGRVASH…LHAETYFTIS (308 aa). The 176-residue stretch at 1365–1540 folds into the Helicase ATP-binding 2 domain; that stretch reads HVLYHTDNNV…WLGVGEIGLF (176 aa). 1378–1385 lines the ATP pocket; the sequence is APTGSGKT. The DEIH box motif lies at 1482–1485; that stretch reads DEIH. The 210-residue stretch at 1571–1780 folds into the Helicase C-terminal 2 domain; sequence NKPAYAAICT…GTIGNKEDAV (210 aa). The SEC63 2 domain occupies 1839–2150; the sequence is PTMLGTIASQ…YLGFEQEHSI (312 aa).

The protein belongs to the DExH box helicase family.

The protein resides in the nucleus. The enzyme catalyses ATP + H2O = ADP + phosphate + H(+). Its function is as follows. RNA helicase that plays an essential role in pre-mRNA splicing as component of the U5 snRNP and U4/U6-U5 tri-snRNP complexes. Involved in spliceosome assembly, activation and disassembly. The protein is DExH-box ATP-dependent RNA helicase DExH14 of Arabidopsis thaliana (Mouse-ear cress).